The chain runs to 322 residues: HPr kinase/phosphorylase (322 aa).

Catalysis depends on residues His-146 and Lys-167. 161 to 168 (GDSGLGKS) is an ATP binding site. Residue Ser-168 participates in Mg(2+) binding. Catalysis depends on Asp-185, which acts as the Proton acceptor; for phosphorylation activity. Proton donor; for dephosphorylation activity. The important for the catalytic mechanism of both phosphorylation and dephosphorylation stretch occupies residues 209-218 (LEVRGLGLLD). Residue Glu-210 participates in Mg(2+) binding. Arg-250 is an active-site residue. Residues 271–276 (QVAAGR) are important for the catalytic mechanism of dephosphorylation.

It belongs to the HPrK/P family. Homohexamer. It depends on Mg(2+) as a cofactor.

It carries out the reaction [HPr protein]-L-serine + ATP = [HPr protein]-O-phospho-L-serine + ADP + H(+). It catalyses the reaction [HPr protein]-O-phospho-L-serine + phosphate + H(+) = [HPr protein]-L-serine + diphosphate. Its function is as follows. Catalyzes the ATP- as well as the pyrophosphate-dependent phosphorylation of a specific serine residue in HPr, a phosphocarrier protein of the phosphoenolpyruvate-dependent sugar phosphotransferase system (PTS). HprK/P also catalyzes the pyrophosphate-producing, inorganic phosphate-dependent dephosphorylation (phosphorolysis) of seryl-phosphorylated HPr (P-Ser-HPr). The chain is HPr kinase/phosphorylase from Paraburkholderia xenovorans (strain LB400).